A 233-amino-acid polypeptide reads, in one-letter code: Ion-translocating oxidoreductase complex subunit E (233 aa).

Transmembrane regions (helical) follow at residues 18 to 38 (ALVQLLGLCPLLAVSSTATNA), 39 to 59 (LGLGLATTLVLVCTNTAVSAL), 69 to 89 (IPIYVMIIASVVSTVQMLINA), 92 to 112 (FGLYQSLGIFIPLIVTNCIVI), 128 to 148 (ALDGFAMGMGATCALFVLGAL), and 182 to 202 (PFLLAMLPPGAFIGLGLLLAG).

It belongs to the NqrDE/RnfAE family. The complex is composed of six subunits: RnfA, RnfB, RnfC, RnfD, RnfE and RnfG.

The protein resides in the cell inner membrane. Its function is as follows. Part of a membrane-bound complex that couples electron transfer with translocation of ions across the membrane. This Yersinia pseudotuberculosis serotype O:1b (strain IP 31758) protein is Ion-translocating oxidoreductase complex subunit E.